A 418-amino-acid chain; its full sequence is uncharacterized protein (418 aa).

Residues 1 to 24 (MSGTAGFITVSPGPPTEAPGGFPR) form a disordered region.

This sequence to A.pernix APE_1276 and S.solfataricus SSO2105.

This is an uncharacterized protein from Aeropyrum pernix (strain ATCC 700893 / DSM 11879 / JCM 9820 / NBRC 100138 / K1).